The chain runs to 234 residues: Sugar fermentation stimulation protein A (234 aa).

The H-T-H motif DNA-binding region spans 201-220; sequence LLSEAQQRGVEILAYKAEIS.

It belongs to the SfsA family.

Binds to DNA non-specifically. Could be a regulatory factor involved in maltose metabolism. The protein is Sugar fermentation stimulation protein A of Shigella flexneri serotype 5b (strain 8401).